Here is a 169-residue protein sequence, read N- to C-terminus: Ribosome maturation factor RimM (169 aa).

Residues 94–167 (ENEFYFHEII…KITIEVMEGL (74 aa)) enclose the PRC barrel domain.

This sequence belongs to the RimM family. As to quaternary structure, binds ribosomal protein uS19.

It is found in the cytoplasm. Functionally, an accessory protein needed during the final step in the assembly of 30S ribosomal subunit, possibly for assembly of the head region. Essential for efficient processing of 16S rRNA. May be needed both before and after RbfA during the maturation of 16S rRNA. It has affinity for free ribosomal 30S subunits but not for 70S ribosomes. The protein is Ribosome maturation factor RimM of Listeria monocytogenes serotype 4b (strain F2365).